Here is a 272-residue protein sequence, read N- to C-terminus: Hydroxyacylglutathione hydrolase (272 aa).

The Zn(2+) site is built by His-62, His-64, Asp-66, His-67, His-126, Asp-146, and His-184.

This sequence belongs to the metallo-beta-lactamase superfamily. Glyoxalase II family. As to quaternary structure, monomer. Requires Zn(2+) as cofactor.

The catalysed reaction is an S-(2-hydroxyacyl)glutathione + H2O = a 2-hydroxy carboxylate + glutathione + H(+). Its pathway is secondary metabolite metabolism; methylglyoxal degradation; (R)-lactate from methylglyoxal: step 2/2. In terms of biological role, thiolesterase that catalyzes the hydrolysis of S-D-lactoyl-glutathione to form glutathione and D-lactic acid. The sequence is that of Hydroxyacylglutathione hydrolase from Saccharophagus degradans (strain 2-40 / ATCC 43961 / DSM 17024).